Consider the following 313-residue polypeptide: MFASIWQTRAVGVLIGCLLDVVFGDPKRGHPVALFGRAAAKLEQITYRDGRVAGAVHVGLLVGAVGLLGAALQRLPGRCWPVAATATATWAALGGTSLARTGRQISDLLERDDVEAARRLLPSLCGRDPAQLGGPGLTRAALESVAENTADAQVVPLLWAASSGVPAVLGYRAINTLDSMIGYRSPRYLRFGWAAARLDDWANYVGARATAVLVVICAPVVGGSPRGAVRAWRRDAARHPSPNAGVVEAAFAGALDVRLGGPTRYHHELQIRPTLGDGRSPKVADLRRAVVLSRVVQAGAAVLAVMLVYRRRP.

A run of 5 helical transmembrane segments spans residues 52–72 (VAGAVHVGLLVGAVGLLGAAL), 79–99 (CWPVAATATATWAALGGTSLA), 154–174 (VVPLLWAASSGVPAVLGYRAI), 204–224 (YVGARATAVLVVICAPVVGGS), and 289–309 (AVVLSRVVQAGAAVLAVMLVY).

It belongs to the CobD/CbiB family.

Its subcellular location is the cell membrane. It participates in cofactor biosynthesis; adenosylcobalamin biosynthesis. Its function is as follows. Converts cobyric acid to cobinamide by the addition of aminopropanol on the F carboxylic group. This Mycobacterium bovis (strain ATCC BAA-935 / AF2122/97) protein is Cobalamin biosynthesis protein CobD.